The sequence spans 269 residues: Putative phosphoenolpyruvate synthase regulatory protein (269 aa).

149–156 contacts ADP; it reads GVSRSGKT.

It belongs to the pyruvate, phosphate/water dikinase regulatory protein family. PSRP subfamily.

It catalyses the reaction [pyruvate, water dikinase] + ADP = [pyruvate, water dikinase]-phosphate + AMP + H(+). It carries out the reaction [pyruvate, water dikinase]-phosphate + phosphate + H(+) = [pyruvate, water dikinase] + diphosphate. In terms of biological role, bifunctional serine/threonine kinase and phosphorylase involved in the regulation of the phosphoenolpyruvate synthase (PEPS) by catalyzing its phosphorylation/dephosphorylation. The polypeptide is Putative phosphoenolpyruvate synthase regulatory protein (Colwellia psychrerythraea (strain 34H / ATCC BAA-681) (Vibrio psychroerythus)).